We begin with the raw amino-acid sequence, 81 residues long: MKKVLRVYGGVMRLVRLLPADSRPYYAKYARENFVNYREVDQSETSLDELFQRAYNHSLWVLKKYSIDESAATKLKEICFE.

This sequence belongs to the complex I LYR family. LYRM9 subfamily.

This chain is LYR motif-containing protein At3g19508, found in Arabidopsis thaliana (Mouse-ear cress).